We begin with the raw amino-acid sequence, 338 residues long: MIEADRLMSAAAVTGEEVIDRAIRPKKLEDYIGQPHVLEQMEIFIQAAKMRGDALDHLLISGPPGLGKTTLANIVANEMGVNLRTTSGPVLEKAGDLAAMLTSLEPHDVLFIDEIHRLSPVVEEVLYPAMEDYQLDIMIGEGPAGRSIKIELPPFTLVGATTRAGSLTPPLRDRFGIVQRLEFYQTGDLQHIVSRSAVCLALNITEGGAREIARRARGTPRIANRLLRRVRDFAEVRAAGHITDDVAVSALNMLNVDTEGFDFMDRKLLLAIIDKFVGGPVGLDNLAAAIGEERETIEDVLEPFLIQQGFIQRTPRGRIATVHAYRHFGLEEHGGDPE.

The interval 4-184 is large ATPase domain (RuvB-L); the sequence is ADRLMSAAAV…FGIVQRLEFY (181 aa). ATP-binding positions include isoleucine 23, arginine 24, glycine 65, lysine 68, threonine 69, threonine 70, 131–133, arginine 174, tyrosine 184, and arginine 221; that span reads EDY. Threonine 69 provides a ligand contact to Mg(2+). Residues 185–255 form a small ATPAse domain (RuvB-S) region; sequence QTGDLQHIVS…VAVSALNMLN (71 aa). Positions 258-338 are head domain (RuvB-H); it reads TEGFDFMDRK…GLEEHGGDPE (81 aa). Residues arginine 294, arginine 313, and arginine 318 each contribute to the DNA site.

Belongs to the RuvB family. In terms of assembly, homohexamer. Forms an RuvA(8)-RuvB(12)-Holliday junction (HJ) complex. HJ DNA is sandwiched between 2 RuvA tetramers; dsDNA enters through RuvA and exits via RuvB. An RuvB hexamer assembles on each DNA strand where it exits the tetramer. Each RuvB hexamer is contacted by two RuvA subunits (via domain III) on 2 adjacent RuvB subunits; this complex drives branch migration. In the full resolvosome a probable DNA-RuvA(4)-RuvB(12)-RuvC(2) complex forms which resolves the HJ.

It is found in the cytoplasm. It carries out the reaction ATP + H2O = ADP + phosphate + H(+). In terms of biological role, the RuvA-RuvB-RuvC complex processes Holliday junction (HJ) DNA during genetic recombination and DNA repair, while the RuvA-RuvB complex plays an important role in the rescue of blocked DNA replication forks via replication fork reversal (RFR). RuvA specifically binds to HJ cruciform DNA, conferring on it an open structure. The RuvB hexamer acts as an ATP-dependent pump, pulling dsDNA into and through the RuvAB complex. RuvB forms 2 homohexamers on either side of HJ DNA bound by 1 or 2 RuvA tetramers; 4 subunits per hexamer contact DNA at a time. Coordinated motions by a converter formed by DNA-disengaged RuvB subunits stimulates ATP hydrolysis and nucleotide exchange. Immobilization of the converter enables RuvB to convert the ATP-contained energy into a lever motion, pulling 2 nucleotides of DNA out of the RuvA tetramer per ATP hydrolyzed, thus driving DNA branch migration. The RuvB motors rotate together with the DNA substrate, which together with the progressing nucleotide cycle form the mechanistic basis for DNA recombination by continuous HJ branch migration. Branch migration allows RuvC to scan DNA until it finds its consensus sequence, where it cleaves and resolves cruciform DNA. This chain is Holliday junction branch migration complex subunit RuvB, found in Sodalis glossinidius (strain morsitans).